Consider the following 230-residue polypeptide: Cytidylate kinase (230 aa).

11–19 (GQSAAGKST) contributes to the ATP binding site.

Belongs to the cytidylate kinase family. Type 1 subfamily.

The protein resides in the cytoplasm. The enzyme catalyses CMP + ATP = CDP + ADP. The catalysed reaction is dCMP + ATP = dCDP + ADP. This chain is Cytidylate kinase, found in Chloroflexus aggregans (strain MD-66 / DSM 9485).